Reading from the N-terminus, the 162-residue chain is NADH-quinone oxidoreductase subunit I (162 aa).

4Fe-4S ferredoxin-type domains follow at residues 53 to 83 and 93 to 122; these read QRRYANGEERCIACKLCEAVCPAMAISIESE and SRYDIDLTKCIFCGFCEEACPVDAIVETHI. Residues Cys-63, Cys-66, Cys-69, Cys-73, Cys-102, Cys-105, Cys-108, and Cys-112 each contribute to the [4Fe-4S] cluster site.

This sequence belongs to the complex I 23 kDa subunit family. NDH-1 is composed of 14 different subunits. Subunits NuoA, H, J, K, L, M, N constitute the membrane sector of the complex. It depends on [4Fe-4S] cluster as a cofactor.

It is found in the cell inner membrane. The enzyme catalyses a quinone + NADH + 5 H(+)(in) = a quinol + NAD(+) + 4 H(+)(out). Its function is as follows. NDH-1 shuttles electrons from NADH, via FMN and iron-sulfur (Fe-S) centers, to quinones in the respiratory chain. The immediate electron acceptor for the enzyme in this species is believed to be ubiquinone. Couples the redox reaction to proton translocation (for every two electrons transferred, four hydrogen ions are translocated across the cytoplasmic membrane), and thus conserves the redox energy in a proton gradient. This Chromobacterium violaceum (strain ATCC 12472 / DSM 30191 / JCM 1249 / CCUG 213 / NBRC 12614 / NCIMB 9131 / NCTC 9757 / MK) protein is NADH-quinone oxidoreductase subunit I.